The following is a 340-amino-acid chain: Guanine nucleotide-binding protein G(I)/G(S)/G(T) subunit beta-1 (340 aa).

N-acetylserine is present on Ser2. The residue at position 2 (Ser2) is a Phosphoserine. 7 WD repeats span residues 46–94 (RTRR…HAIP), 95–140 (LRSS…RELA), 141–181 (GHTG…TTFT), 182–223 (GHTG…QTFT), 224–267 (GHES…YSHD), 268–309 (NIIC…GVLA), and 310–340 (GHDN…KIWN). Phosphohistidine is present on His266.

This sequence belongs to the WD repeat G protein beta family. In terms of assembly, g proteins are composed of 3 units, alpha, beta and gamma. The heterodimer formed by GNB1 and GNG2 interacts with ARHGEF5. The heterodimer formed by GNB1 and GNG2 interacts with GRK2. Forms a complex with GNAO1 and GNG3. Interacts with ARHGEF18 and RASD2. Forms complexes with TAS2R14 and G-proteins; these complexes play a role in the perception of bitterness. Component of the TAS2R14-GNAI1 complex, consisting of TAS2R14, GNAI1, GNB1 and GNG2. Component of the TAS2R14-GNAT3 complex, consisting of TAS2R14, GNAT3, GNB1 and GNG2. Component of the TAS2R14-GNAS2 complex, consisting of TAS2R14, GNAS2, GNB1 and GNG2. Post-translationally, phosphorylation at His-266 by NDKB contributes to G protein activation by increasing the high energetic phosphate transfer onto GDP.

Functionally, guanine nucleotide-binding proteins (G proteins) are involved as a modulator or transducer in various transmembrane signaling systems. The beta and gamma chains are required for the GTPase activity, for replacement of GDP by GTP, and for G protein-effector interaction. The chain is Guanine nucleotide-binding protein G(I)/G(S)/G(T) subunit beta-1 (GNB1) from Bos taurus (Bovine).